Here is a 455-residue protein sequence, read N- to C-terminus: Bifunctional protein GlmU (455 aa).

The tract at residues 1-229 (MLNSAMSVVI…ISETEGVNNR (229 aa)) is pyrophosphorylase. Residues 11–14 (LAAG), lysine 25, glutamine 76, 81–82 (GT), 103–105 (YGD), glycine 140, glutamate 154, asparagine 169, and asparagine 227 each bind UDP-N-acetyl-alpha-D-glucosamine. Residue aspartate 105 coordinates Mg(2+). Mg(2+) is bound at residue asparagine 227. The linker stretch occupies residues 230–250 (LQLSRLERIYQAEQAEKLLLA). Residues 251–455 (GVMLRDPARF…KQGWQRPVKK (205 aa)) are N-acetyltransferase. Residues arginine 333 and lysine 351 each contribute to the UDP-N-acetyl-alpha-D-glucosamine site. The active-site Proton acceptor is the histidine 363. 2 residues coordinate UDP-N-acetyl-alpha-D-glucosamine: tyrosine 366 and asparagine 377. Acetyl-CoA contacts are provided by residues alanine 380, 386–387 (NY), serine 405, alanine 423, and arginine 440.

It in the N-terminal section; belongs to the N-acetylglucosamine-1-phosphate uridyltransferase family. The protein in the C-terminal section; belongs to the transferase hexapeptide repeat family. As to quaternary structure, homotrimer. It depends on Mg(2+) as a cofactor.

It localises to the cytoplasm. The enzyme catalyses alpha-D-glucosamine 1-phosphate + acetyl-CoA = N-acetyl-alpha-D-glucosamine 1-phosphate + CoA + H(+). It catalyses the reaction N-acetyl-alpha-D-glucosamine 1-phosphate + UTP + H(+) = UDP-N-acetyl-alpha-D-glucosamine + diphosphate. It functions in the pathway nucleotide-sugar biosynthesis; UDP-N-acetyl-alpha-D-glucosamine biosynthesis; N-acetyl-alpha-D-glucosamine 1-phosphate from alpha-D-glucosamine 6-phosphate (route II): step 2/2. Its pathway is nucleotide-sugar biosynthesis; UDP-N-acetyl-alpha-D-glucosamine biosynthesis; UDP-N-acetyl-alpha-D-glucosamine from N-acetyl-alpha-D-glucosamine 1-phosphate: step 1/1. It participates in bacterial outer membrane biogenesis; LPS lipid A biosynthesis. Its function is as follows. Catalyzes the last two sequential reactions in the de novo biosynthetic pathway for UDP-N-acetylglucosamine (UDP-GlcNAc). The C-terminal domain catalyzes the transfer of acetyl group from acetyl coenzyme A to glucosamine-1-phosphate (GlcN-1-P) to produce N-acetylglucosamine-1-phosphate (GlcNAc-1-P), which is converted into UDP-GlcNAc by the transfer of uridine 5-monophosphate (from uridine 5-triphosphate), a reaction catalyzed by the N-terminal domain. The sequence is that of Bifunctional protein GlmU from Salmonella arizonae (strain ATCC BAA-731 / CDC346-86 / RSK2980).